Reading from the N-terminus, the 957-residue chain is Glycine dehydrogenase (decarboxylating) (957 aa).

At K708 the chain carries N6-(pyridoxal phosphate)lysine.

Belongs to the GcvP family. As to quaternary structure, the glycine cleavage system is composed of four proteins: P, T, L and H. The cofactor is pyridoxal 5'-phosphate.

It carries out the reaction N(6)-[(R)-lipoyl]-L-lysyl-[glycine-cleavage complex H protein] + glycine + H(+) = N(6)-[(R)-S(8)-aminomethyldihydrolipoyl]-L-lysyl-[glycine-cleavage complex H protein] + CO2. The glycine cleavage system catalyzes the degradation of glycine. The P protein binds the alpha-amino group of glycine through its pyridoxal phosphate cofactor; CO(2) is released and the remaining methylamine moiety is then transferred to the lipoamide cofactor of the H protein. The sequence is that of Glycine dehydrogenase (decarboxylating) from Klebsiella pneumoniae (strain 342).